A 1211-amino-acid polypeptide reads, in one-letter code: Endoplasmic reticulum transmembrane helix translocase (1211 aa).

Residues 1–23 (MGSKALITSPDISSGQLYIKLPT) lie on the Cytoplasmic side of the membrane. The chain crosses the membrane as a helical span at residues 24 to 44 (FFHLYVWPFALFVYPYIGYVY). At 45-54 (QNKLYSEEVR) the chain is on the lumenal side. Residues 55 to 75 (YLTYIAVGTIHALFWLAGEWN) traverse the membrane as a helical segment. Residues 76–191 (TKVYCLMTCR…FDIPIPTFGT (116 aa)) are Cytoplasmic-facing. Positions 155–185 (TIGTLKKSTGLTNIQSEIFLYRYGKNCFDIP) are A-domain; part 1. The chain crosses the membrane as a helical span at residues 192–212 (LFKEHAVAPFFVFQIFCCVLW). The Lumenal portion of the chain corresponds to 213–216 (CLDD). The helical transmembrane segment at 217 to 237 (YWYFSLFSMFMIIALECSVVW) threads the bilayer. Residues 238–397 (QRQRTLTEFR…EKVTANNRES (160 aa)) are Cytoplasmic-facing. Residues 250 to 388 (SIKPYEIQVY…LVRTMVFSSE (139 aa)) form an A-domain; part 2 region. Residues 398–418 (LYFILFLLVFAIAASGYVWHV) form a helical membrane-spanning segment. Residues 419–1057 (GSKTERSRYK…KERPQAGIFN (639 aa)) are Lumenal-facing. The segment at 464 to 493 (YIYCTEPFRIPLSGHLDICCFDKTGTLTEE) is P-domain; part 1. D485 (4-aspartylphosphate intermediate) is an active-site residue. Mg(2+) is bound by residues D485 and T487. ATP-binding positions include 485–487 (DKT), F587, R644, D710, and 824–828 (DGTND). An N-domain region spans residues 495-685 (MVVQGIAGVN…FAGFLIFTSP (191 aa)). A P-domain; part 2 region spans residues 688–845 (EDARQTVQML…HVGVALLNAS (158 aa)). Residue D824 participates in Mg(2+) binding. An arm-like region spans residues 846–955 (EEDMLEMQER…NASDDEAPKL (110 aa)). The tract at residues 956-971 (KLGDASVAAPFTSKLA) is P-domain; part 3. The helical transmembrane segment at 1058-1078 (TYIIGSVLGQFAIHIVTLIYI) threads the bilayer. Residues 1079-1100 (TRVVYLYEDPLEKVDLEETFKP) are Cytoplasmic-facing. Residues 1101-1121 (SLLNTAIYLLQLIQQVSTFAI) form a helical membrane-spanning segment. The Lumenal segment spans residues 1122–1136 (NYQGRPFREALSENK). The chain crosses the membrane as a helical span at residues 1137 to 1157 (GMYYGLLGIAFVAIAGVTEFS). Residues 1158–1174 (PELNAKLQLVKMAYNFQ) lie on the Cytoplasmic side of the membrane. The chain crosses the membrane as a helical span at residues 1175-1195 (IQLLATMVVDYAACWIIEELM). Topologically, residues 1196-1211 (KKYFRDNKPKEIVLRN) are lumenal.

It belongs to the cation transport ATPase (P-type) (TC 3.A.3) family. Type V subfamily. Requires Mg(2+) as cofactor.

It localises to the endoplasmic reticulum membrane. It carries out the reaction [protein]-with a C-terminal TM segment(out) + ATP + H2O = [protein]-with a C-terminal TM segment(in) + ADP + phosphate + H(+). Endoplasmic reticulum translocase required to remove mitochondrial transmembrane proteins mistargeted to the endoplasmic reticulum. Acts as a dislocase that mediates the ATP-dependent extraction of mislocalized mitochondrial transmembrane proteins from the endoplasmic reticulum membrane. Specifically binds mitochondrial tail-anchored transmembrane proteins: has an atypically large substrate-binding pocket that recognizes and binds moderately hydrophobic transmembranes with short hydrophilic lumenal domains. Involved in controlling nuclear calcium ion levels. Required for cytokinesis and stabilizing microtubules. Required for assembly of the forespore membrane. Involved in calcium transport to the endoplasmic reticulum. This chain is Endoplasmic reticulum transmembrane helix translocase, found in Schizosaccharomyces pombe (strain 972 / ATCC 24843) (Fission yeast).